Consider the following 406-residue polypeptide: Exo-alpha-sialidase (406 aa).

Residues 1-20 form the signal peptide; it reads MQSMRFMILALLVQFLPAWA. Positions 59, 78, 84, and 148 each coordinate substrate. Asn-235 carries an N-linked (GlcNAc...) asparagine glycan. Substrate is bound by residues Arg-265, Arg-322, 322–323, 331–332, Lys-337, Tyr-358, Asp-376, and 376–378; these read RR, YD, and DFF. Residue Asn-396 is glycosylated (N-linked (GlcNAc...) asparagine).

This sequence belongs to the glycosyl hydrolase 33 family.

The catalysed reaction is Hydrolysis of alpha-(2-&gt;3)-, alpha-(2-&gt;6)-, alpha-(2-&gt;8)- glycosidic linkages of terminal sialic acid residues in oligosaccharides, glycoproteins, glycolipids, colominic acid and synthetic substrates.. Sialidase is able to release sialic acid from a wide variety of natural substrates including bovine salivary mucin, colominic acid, bovine fetuin, a serum glycoprotein containing both alpha-2-6 and alpha-2-3-linkages in a ratio of about 3:2, and glycoproteins and glycolipids from thermally denatured human lung epithelial cells. Does not show any trans-sialidase activity since it is able to remove terminal sialic acid residues but is unable to catalyze their transfer to the acceptor substrate. 2-keto-3-deoxynononic acid (KDN) is the preferred substrate and A.fumigatus can utilize KDN as a sole carbon source. This Aspergillus fumigatus (strain ATCC MYA-4609 / CBS 101355 / FGSC A1100 / Af293) (Neosartorya fumigata) protein is Exo-alpha-sialidase.